A 309-amino-acid polypeptide reads, in one-letter code: Ribosomal protein L11 methyltransferase (309 aa).

Thr144, Gly165, Asp187, and Asn235 together coordinate S-adenosyl-L-methionine.

Belongs to the methyltransferase superfamily. PrmA family.

It localises to the cytoplasm. The enzyme catalyses L-lysyl-[protein] + 3 S-adenosyl-L-methionine = N(6),N(6),N(6)-trimethyl-L-lysyl-[protein] + 3 S-adenosyl-L-homocysteine + 3 H(+). Methylates ribosomal protein L11. The polypeptide is Ribosomal protein L11 methyltransferase (Prochlorococcus marinus (strain MIT 9215)).